A 288-amino-acid chain; its full sequence is uncharacterized protein (288 aa).

Residues 92–112 traverse the membrane as a helical segment; the sequence is LPTILVILGVIVVIAIVYAII. A disordered region spans residues 121–183; it reads DDHNAASEKA…NDSEKLEIKA (63 aa). Basic and acidic residues-rich tracts occupy residues 136 to 146 and 154 to 181; these read SKYEIPKDSTL and SEKE…KLEI. A coiled-coil region spans residues 147 to 185; it reads KENQNNSSEKETDTKKETKENEDKKKENDSEKLEIKAAG.

The protein resides in the cell membrane. This is an uncharacterized protein from Bacillus subtilis (strain 168).